The following is a 132-amino-acid chain: Small ribosomal subunit protein uS8c (132 aa).

Belongs to the universal ribosomal protein uS8 family. Part of the 30S ribosomal subunit.

It is found in the plastid. The protein resides in the chloroplast. In terms of biological role, one of the primary rRNA binding proteins, it binds directly to 16S rRNA central domain where it helps coordinate assembly of the platform of the 30S subunit. The chain is Small ribosomal subunit protein uS8c (rps8) from Anthoceros angustus (Hornwort).